The following is a 553-amino-acid chain: MDVDKELGMESVKAGASGKPEMRLGTQEETSEGDANESSLLVLSSNVPLLALEFLEIAQAKEKAFLPMVSHTFHMRTEESDASQEGDDLPKSSANTSHPKQDDSPKSSEETIQPKEGDIPKAPEETIQSKKEDLPKSSEKAIQPKESNIPKSSAKPIQPKLGNIPKASVKPSQPKEGDIPKAPEETIQSKKEDLPKSSEEAIQPKEGDIPKSSAKPIQPKLGNIAKTSVKPSQPKESDIPKSPEETIQPKEGDIPKSSAKPIQPKLGNIPKASVKPSQPKEGDISKSPEEAIQPKEGDLPKSLEEAIQPKEGDIPKSPEEAIQPKEGDIPKSLEEAIQPKEGDIPKSPEETIQPKKGDIPKSPEEAIQPKEGDIPKSPKQAIQPKEGDIPKSLEEAIPPKEIDIPKSPEETIQPKEDDSPKSLEEATPSKEGDILKPEEETMEFPEGDKVKVILSKEDFEASLKEAGERLVAVDFSATWCGPCRTIRPFFHALSVKHEDVVFLEVDADNCEEVVRECAIMCVPTFQFYKKEEKVDELCGALKEKLEAVIAELK.

Disordered stretches follow at residues 1–37 (MDVD…DANE) and 77–442 (TEES…EETM). Residues 99–143 (PKQDDSPKSSEETIQPKEGDIPKAPEETIQSKKEDLPKSSEKAIQ) are compositionally biased toward basic and acidic residues. 22 repeat units span residues 113–127 (QPKE…EETI), 128–142 (QSKK…EKAI), 143–157 (QPKE…AKPI), 158–172 (QPKL…VKPS), 173–187 (QPKE…EETI), 188–202 (QSKK…EEAI), 203–217 (QPKE…AKPI), 218–232 (QPKL…VKPS), 233–247 (QPKE…EETI), 248–262 (QPKE…AKPI), 263–277 (QPKL…VKPS), 278–292 (QPKE…EEAI), 293–307 (QPKE…EEAI), 308–322 (QPKE…EEAI), 323–337 (QPKE…EEAI), 338–352 (QPKE…EETI), 353–367 (QPKK…EEAI), 368–382 (QPKE…KQAI), 383–397 (QPKE…EEAI), 398–412 (PPKE…EETI), 413–427 (QPKE…EEAT), and 428–442 (PSKE…EETM). The segment at 113-442 (QPKEGDIPKA…DILKPEEETM (330 aa)) is 22 X 15 AA approximate tandem repeat of Q-P-K-X-G-D-I-P-K-S-[PS]-E-[KE]-X-I. A compositionally biased stretch (basic and acidic residues) spans 173 to 209 (QPKEGDIPKAPEETIQSKKEDLPKSSEEAIQPKEGDI). Residues 233 to 254 (QPKESDIPKSPEETIQPKEGDI) are compositionally biased toward basic and acidic residues. Basic and acidic residues-rich tracts occupy residues 278–376 (QPKE…DIPK) and 385–439 (KEGD…KPEE). Position 362 is a phosphoserine (serine 362). The residue at position 392 (serine 392) is a Phosphoserine. The Thioredoxin domain maps to 429–553 (SKEGDILKPE…KLEAVIAELK (125 aa)). Cysteine 480 and cysteine 483 form a disulfide bridge.

In terms of tissue distribution, testis-specific. Only expressed during spermiogenesis, prominently in round and elongating spermatids.

It is found in the cytoplasm. In terms of biological role, probably plays a regulatory role in sperm development. May participate in regulation of fibrous sheath (FS) assembly by supporting the formation of disulfide bonds during sperm tail morphogenesis. May also be required to rectify incorrect disulfide pairing and generate suitable pairs between the FS constituents. Can reduce disulfide bonds in vitro in the presence of NADP and thioredoxin reductase. This chain is Thioredoxin domain-containing protein 2 (TXNDC2), found in Homo sapiens (Human).